The sequence spans 695 residues: Elongation factor G (695 aa).

The region spanning 12–286 (DKIRNIGIMA…AVIDYLPSPL (275 aa)) is the tr-type G domain. GTP contacts are provided by residues 21–28 (AHIDAGKT), 85–89 (DTPGH), and 139–142 (NKMD).

This sequence belongs to the TRAFAC class translation factor GTPase superfamily. Classic translation factor GTPase family. EF-G/EF-2 subfamily.

Its subcellular location is the cytoplasm. In terms of biological role, catalyzes the GTP-dependent ribosomal translocation step during translation elongation. During this step, the ribosome changes from the pre-translocational (PRE) to the post-translocational (POST) state as the newly formed A-site-bound peptidyl-tRNA and P-site-bound deacylated tRNA move to the P and E sites, respectively. Catalyzes the coordinated movement of the two tRNA molecules, the mRNA and conformational changes in the ribosome. This Thermotoga neapolitana (strain ATCC 49049 / DSM 4359 / NBRC 107923 / NS-E) protein is Elongation factor G.